A 513-amino-acid chain; its full sequence is Xylose import ATP-binding protein XylG (513 aa).

2 ABC transporter domains span residues 5–242 (LEMK…VGRE) and 259–505 (LRIE…LRSE). 37–44 (GENGSGKS) serves as a coordination point for ATP.

The protein belongs to the ABC transporter superfamily. Xylose importer (TC 3.A.1.2.4) family. As to quaternary structure, the complex is composed of two ATP-binding proteins (XylG), two transmembrane proteins (XylH) and a solute-binding protein (XylF).

It is found in the cell inner membrane. It carries out the reaction D-xylose(out) + ATP + H2O = D-xylose(in) + ADP + phosphate + H(+). Its function is as follows. Part of the ABC transporter complex XylFGH involved in xylose import. Responsible for energy coupling to the transport system. This is Xylose import ATP-binding protein XylG from Escherichia coli (strain UTI89 / UPEC).